Consider the following 211-residue polypeptide: Interleukin-6 (211 aa).

Positions 1–24 are cleaved as a signal peptide; that stretch reads MKFLSARDFHPVAFLGLMLVTTTA. Cystine bridges form between C70/C76 and C99/C109.

The protein belongs to the IL-6 superfamily. As to quaternary structure, component of a hexamer of two molecules each of IL6, IL6R and IL6ST; first binds to IL6R to associate with the signaling subunit IL6ST. Interacts with IL6R (via the N-terminal ectodomain); this interaction may be affected by IL6R-binding with SORL1, hence decreasing IL6 cis signaling. Interacts with SORL1 (via the N-terminal ectodomain); this interaction leads to IL6 internalization and lysosomal degradation. May form a trimeric complex with the soluble SORL1 ectodomain and soluble IL6R receptor; this interaction might stabilize circulating IL6, hence promoting IL6 trans signaling. Post-translationally, N- and O-glycosylated. In terms of tissue distribution, expressed by dendritic cells and macrophages. Expressed by activated follicular B cells. Abundantly expressed in the central nervous system (CNS), particularly the hypothalamic region.

It localises to the secreted. Cytokine with a wide variety of biological functions in immunity, tissue regeneration, and metabolism. Binds to IL6R, then the complex associates to the signaling subunit IL6ST/gp130 to trigger the intracellular IL6-signaling pathway. The interaction with the membrane-bound IL6R and IL6ST stimulates 'classic signaling', whereas the binding of IL6 and soluble IL6R to IL6ST stimulates 'trans-signaling'. Alternatively, 'cluster signaling' occurs when membrane-bound IL6:IL6R complexes on transmitter cells activate IL6ST receptors on neighboring receiver cells. In terms of biological role, IL6 is a potent inducer of the acute phase response. Rapid production of IL6 contributes to host defense during infection and tissue injury, but excessive IL6 synthesis is involved in disease pathology. In the innate immune response, is synthesized by myeloid cells, such as macrophages and dendritic cells, upon recognition of pathogens through toll-like receptors (TLRs) at the site of infection or tissue injury. In the adaptive immune response, is required for the differentiation of B-cells into immunoglolin-secreting cells. Plays a major role in the differentiation of CD4(+) T cell subsets. Essential factor for the development of T follicular helper (Tfh) cells that are required for the induction of germinal-center formation. Together with IL21, controls the early generation of Tfh cells and are critical for an effective antibody response to acute viral infection. Required to drive naive CD4(+) T cells to the Th17 lineage, through 'cluster signaling' by dendritic cells. Also required for proliferation of myeloma cells and the survival of plasmablast cells. Functionally, acts as an essential factor in bone homeostasis and on vessels directly or indirectly by induction of VEGF, resulting in increased angiogenesis activity and vascular permeability. Induces, through 'trans-signaling' and synergistically with IL1B and TNF, the production of VEGF. Involved in metabolic controls, is discharged into the bloodstream after muscle contraction increasing lipolysis and improving insulin resistance. 'Trans-signaling' in central nervous system regulates energy and glucose homeostasis. Mediates, through GLP-1, crosstalk between insulin-sensitive tissues, intestinal L cells and pancreatic islets to adapt to changes in insulin demand. Also acts as a myokine. Plays a protective role during liver injury, being required for maintenance of tissue regeneration. Also has a pivotal role in iron metabolism by regulating HAMP/hepcidin expression upon inflammation or bacterial infection. Through activation of IL6ST-YAP-NOTCH pathway, induces inflammation-induced epithelial regeneration. This is Interleukin-6 from Mus musculus (Mouse).